The sequence spans 151 residues: C-C motif chemokine 25 (151 aa).

Residues 1 to 23 (MRPWLLACLVACFVGAWAPAIHA) form the signal peptide. 2 disulfides stabilise this stretch: Cys30-Cys58 and Cys31-Cys75. Positions 93 to 151 (RNKKDSKPHHSGRRFFQGPQSGVRKLSSGTSRPLLLKFSGPTRSSKRKASLLTTAIPGP) are disordered.

It belongs to the intercrine beta (chemokine CC) family.

It is found in the secreted. Potentially involved in T-cell development. Recombinant protein shows chemotactic activity on thymocytes, macrophages, THP-1 cells, and dendritics cells but is inactive on peripheral blood lymphocytes and neutrophils. Binds to CCR9. Binds to atypical chemokine receptor ACKR4 and mediates the recruitment of beta-arrestin (ARRB1/2) to ACKR4. The sequence is that of C-C motif chemokine 25 (CCL25) from Sus scrofa (Pig).